The chain runs to 209 residues: Mitochondrial import inner membrane translocase subunit Tim23 (209 aa).

Helical transmembrane passes span 73–93 (FELAFFTIGGCCISGAAFGAL), 125–145 (ALWANTLGSLALLYSAFGVIV), and 180–200 (GGLAGLALASTFALYNNWEHI).

This sequence belongs to the Tim17/Tim22/Tim23 family. Component of the TIM23 complex at least composed of timm23, timm17 and timm50. The complex interacts with the timm44 component of the PAM complex.

Its subcellular location is the mitochondrion inner membrane. Functionally, essential component of the TIM23 complex, a complex that mediates the translocation of transit peptide-containing proteins across the mitochondrial inner membrane. The protein is Mitochondrial import inner membrane translocase subunit Tim23 (timm23) of Xenopus laevis (African clawed frog).